The chain runs to 406 residues: Argininosuccinate synthase (406 aa).

Residues 11–19 (AYSGGLDTS) and alanine 38 each bind ATP. The L-citrulline site is built by tyrosine 91 and serine 96. Glycine 121 lines the ATP pocket. L-aspartate-binding residues include threonine 123, asparagine 127, and aspartate 128. L-citrulline is bound at residue asparagine 127. Positions 131, 181, 190, 266, and 278 each coordinate L-citrulline.

Belongs to the argininosuccinate synthase family. Type 1 subfamily. In terms of assembly, homotetramer.

It localises to the cytoplasm. The catalysed reaction is L-citrulline + L-aspartate + ATP = 2-(N(omega)-L-arginino)succinate + AMP + diphosphate + H(+). Its pathway is amino-acid biosynthesis; L-arginine biosynthesis; L-arginine from L-ornithine and carbamoyl phosphate: step 2/3. The polypeptide is Argininosuccinate synthase (Campylobacter jejuni (strain RM1221)).